Here is a 339-residue protein sequence, read N- to C-terminus: Ketol-acid reductoisomerase (NADP(+)) (339 aa).

The region spanning 1 to 182 (MRVYYDRDAD…GGGRSGIIET (182 aa)) is the KARI N-terminal Rossmann domain. Residues 24 to 27 (YGSQ), arginine 48, serine 51, serine 53, and 83 to 86 (DELQ) each bind NADP(+). Histidine 108 is a catalytic residue. Glycine 134 lines the NADP(+) pocket. Positions 183–328 (TFREECETDL…GRLRAMMPWI (146 aa)) constitute a KARI C-terminal knotted domain. Residues aspartate 191, glutamate 195, glutamate 227, and glutamate 231 each contribute to the Mg(2+) site. Residue serine 252 participates in substrate binding.

It belongs to the ketol-acid reductoisomerase family. The cofactor is Mg(2+).

The enzyme catalyses (2R)-2,3-dihydroxy-3-methylbutanoate + NADP(+) = (2S)-2-acetolactate + NADPH + H(+). It catalyses the reaction (2R,3R)-2,3-dihydroxy-3-methylpentanoate + NADP(+) = (S)-2-ethyl-2-hydroxy-3-oxobutanoate + NADPH + H(+). It functions in the pathway amino-acid biosynthesis; L-isoleucine biosynthesis; L-isoleucine from 2-oxobutanoate: step 2/4. Its pathway is amino-acid biosynthesis; L-valine biosynthesis; L-valine from pyruvate: step 2/4. Its function is as follows. Involved in the biosynthesis of branched-chain amino acids (BCAA). Catalyzes an alkyl-migration followed by a ketol-acid reduction of (S)-2-acetolactate (S2AL) to yield (R)-2,3-dihydroxy-isovalerate. In the isomerase reaction, S2AL is rearranged via a Mg-dependent methyl migration to produce 3-hydroxy-3-methyl-2-ketobutyrate (HMKB). In the reductase reaction, this 2-ketoacid undergoes a metal-dependent reduction by NADPH to yield (R)-2,3-dihydroxy-isovalerate. The polypeptide is Ketol-acid reductoisomerase (NADP(+)) (Rhodospirillum rubrum (strain ATCC 11170 / ATH 1.1.1 / DSM 467 / LMG 4362 / NCIMB 8255 / S1)).